A 1230-amino-acid chain; its full sequence is Potassium channel subfamily T member 1 (1230 aa).

The interval Met1 to Leu37 is disordered. The Cytoplasmic portion of the chain corresponds to Met1–Ser93. Residues Leu94–Cys126 form a helical membrane-spanning segment. At Trp127–Arg153 the chain is on the extracellular side. Residues Asn133 and Asn137 are each glycosylated (N-linked (GlcNAc...) asparagine). Residues Lys154–Leu178 form a helical membrane-spanning segment. Over Ser179 to Ser192 the chain is Cytoplasmic. The helical transmembrane segment at Phe193 to Phe208 threads the bilayer. Over Trp209–Leu215 the chain is Extracellular. A helical transmembrane segment spans residues Phe216–Met233. The Cytoplasmic segment spans residues Ile234–Ser246. A helical transmembrane segment spans residues Ala247–Glu274. Residues Arg275–Ser281 are Extracellular-facing. Positions Leu282–Thr302 form an intramembrane region, pore-forming. K(+) contacts are provided by Val296 and Gly297. Over Pro303–Lys304 the chain is Extracellular. A helical membrane pass occupies residues Ile305–Gln338. The Cytoplasmic portion of the chain corresponds to Lys339–Leu1230. One can recognise an RCK N-terminal 1 domain in the interval Glu352–Val488. Na(+) contacts are provided by Leu513, His516, Ser538, and Asn540. The segment at Thr660 to Pro689 is disordered. 2 residues coordinate Zn(2+): Cys758 and Cys759. K(+)-binding residues include Arg761 and Lys764. Residues Arg761 and Lys764 each contribute to the Na(+) site. The Zn(2+) site is built by Cys766 and His768. K(+) is bound by residues Asn769, Tyr771, Tyr777, and Gly778. Residue Tyr771 coordinates Na(+). Phe779 is a Na(+) binding site. The region spanning Asn781 to Leu921 is the RCK N-terminal 2 domain. 5 residues coordinate K(+): Ser787, Leu818, Asp820, Gly842, and Asp865. 2 disordered regions span residues Glu1048–Leu1078 and Ser1204–Leu1230. Gly residues predominate over residues Ala1057–Asp1072. Low complexity predominate over residues Ser1204 to Ser1219.

Belongs to the potassium channel family. Calcium-activated (TC 1.A.1.3) subfamily. KCa4.1/KCNT1 sub-subfamily. In terms of assembly, homotetramer; which constitutes the Na(+)-activated K(+) channel. Interacts with KCNT2; these heterodimer channels differ from the homomers in their unitary conductance, kinetic behavior, subcellular localization, and response to activation of protein kinase C. Interacts (via C-terminus) with FMR1; this interaction alters gating properties of KCNT1. Interacts with CRBN via its cytoplasmic C-terminus. In terms of processing, phosphorylated by protein kinase C. Phosphorylation of the C-terminal domain increases channel activity. As to expression, highest expression in liver, brain and spinal cord. Lowest expression in skeletal muscle.

The protein localises to the cell membrane. The catalysed reaction is K(+)(in) = K(+)(out). Activated by high intracellular Na(+). In addition to activation by Na(+), is cooperatively activated by intracellular Cl(-) levels. Inhibited by Zn(2+). Activated upon stimulation of G-protein coupled receptors, such as CHRM1 and GRIA1. Sodium-activated K(+) channel. Acts as an important mediator of neuronal membrane excitability. Contributes to the delayed outward currents. Regulates neuronal bursting in sensory neurons. Contributes to synaptic development and plasticity. In Homo sapiens (Human), this protein is Potassium channel subfamily T member 1.